Here is a 388-residue protein sequence, read N- to C-terminus: Norsolorinic acid reductase (388 aa).

Catalysis depends on tyrosine 74, which acts as the Proton donor. Residue 233–243 (GVLGRGQFRSA) coordinates NADP(+).

Belongs to the aldo/keto reductase family. Aldo/keto reductase 2 subfamily.

The protein operates within mycotoxin biosynthesis; aflatoxin biosynthesis. The chain is Norsolorinic acid reductase (norA) from Aspergillus flavus (strain ATCC 200026 / FGSC A1120 / IAM 13836 / NRRL 3357 / JCM 12722 / SRRC 167).